Here is a 205-residue protein sequence, read N- to C-terminus: Holliday junction branch migration complex subunit RuvA (205 aa).

The interval 1-64 (MIGRIRGLLV…EDAQLLYGFI (64 aa)) is domain I. The tract at residues 65-143 (SKQERALFRL…SLMEASVGSE (79 aa)) is domain II. A flexible linker region spans residues 144–156 (REFMLQSNYTAPV). Residues 157 to 205 (VANTAEEDAIAALLSLGYKPAQASKAVSAVYVDGIDSESLIKSALKSML) are domain III.

The protein belongs to the RuvA family. As to quaternary structure, homotetramer. Forms an RuvA(8)-RuvB(12)-Holliday junction (HJ) complex. HJ DNA is sandwiched between 2 RuvA tetramers; dsDNA enters through RuvA and exits via RuvB. An RuvB hexamer assembles on each DNA strand where it exits the tetramer. Each RuvB hexamer is contacted by two RuvA subunits (via domain III) on 2 adjacent RuvB subunits; this complex drives branch migration. In the full resolvosome a probable DNA-RuvA(4)-RuvB(12)-RuvC(2) complex forms which resolves the HJ.

It is found in the cytoplasm. In terms of biological role, the RuvA-RuvB-RuvC complex processes Holliday junction (HJ) DNA during genetic recombination and DNA repair, while the RuvA-RuvB complex plays an important role in the rescue of blocked DNA replication forks via replication fork reversal (RFR). RuvA specifically binds to HJ cruciform DNA, conferring on it an open structure. The RuvB hexamer acts as an ATP-dependent pump, pulling dsDNA into and through the RuvAB complex. HJ branch migration allows RuvC to scan DNA until it finds its consensus sequence, where it cleaves and resolves the cruciform DNA. The polypeptide is Holliday junction branch migration complex subunit RuvA (Shewanella piezotolerans (strain WP3 / JCM 13877)).